We begin with the raw amino-acid sequence, 29 residues long: Cysteine-rich venom protein 25-A (29 aa).

The protein belongs to the CRISP family. Contains 8 disulfide bonds. Expressed by the venom gland.

It localises to the secreted. In Naja haje haje (Egyptian cobra), this protein is Cysteine-rich venom protein 25-A.